Reading from the N-terminus, the 539-residue chain is Probable protein kinase UbiB (539 aa).

In terms of domain architecture, Protein kinase spans R125–L493. ATP is bound by residues L131–V139 and K153. D288 serves as the catalytic Proton acceptor. The next 2 helical transmembrane spans lie at L495–A515 and L517–V537.

Belongs to the ABC1 family. UbiB subfamily.

It is found in the cell inner membrane. It functions in the pathway cofactor biosynthesis; ubiquinone biosynthesis [regulation]. Is probably a protein kinase regulator of UbiI activity which is involved in aerobic coenzyme Q (ubiquinone) biosynthesis. The sequence is that of Probable protein kinase UbiB from Pseudomonas putida (strain W619).